Consider the following 230-residue polypeptide: Ion-translocating oxidoreductase complex subunit E (230 aa).

5 consecutive transmembrane segments (helical) span residues 22–42 (LLGL…LGLG), 63–83 (TPAE…VSAV), 86–106 (LINA…PLIV), 125–145 (WLSA…MFVL), and 182–202 (PFLL…MLAV).

Belongs to the NqrDE/RnfAE family. As to quaternary structure, the complex is composed of six subunits: RsxA, RsxB, RsxC, RsxD, RsxE and RsxG.

The protein localises to the cell inner membrane. In terms of biological role, part of a membrane-bound complex that couples electron transfer with translocation of ions across the membrane. Required to maintain the reduced state of SoxR. This Salmonella paratyphi A (strain ATCC 9150 / SARB42) protein is Ion-translocating oxidoreductase complex subunit E.